Consider the following 635-residue polypeptide: Multiple inositol polyphosphate phosphatase 1 (635 aa).

A signal peptide spans 1-23 (MMVKIKNIIILFCIFGLLSNVSS). The Extracellular portion of the chain corresponds to 24-565 (LSSSSSSSQS…GNDSHSKKSS (542 aa)). Residues 66–102 (KNGDSNSQGDGSSGNSNSNSNSNSNSNSNSDSSNEPP) are disordered. Residues 67–99 (NGDSNSQGDGSSGNSNSNSNSNSNSNSNSDSSN) are compositionally biased toward low complexity. His-116 is a catalytic residue. The segment covering 380–421 (SSSSSSSSSSNNGDNSGSNGSSGSGSSTSTSSNDNGSTNNND) has biased composition (low complexity). The interval 380 to 425 (SSSSSSSSSSNNGDNSGSNGSSGSGSSTSTSSNDNGSTNNNDNKVE) is disordered. Residues 566–586 (YFLAIFIPITFLVGGTIGGIF) form a helical membrane-spanning segment. Residues 587–635 (TYFSYEKIMQVKNRKKLTQYGNDEFISSPKSKSFSFKPTKFDSRSPLIQ) lie on the Cytoplasmic side of the membrane. The segment covering 614 to 624 (SPKSKSFSFKP) has biased composition (low complexity). A disordered region spans residues 614–635 (SPKSKSFSFKPTKFDSRSPLIQ).

It belongs to the histidine acid phosphatase family. MINPP1 subfamily.

It localises to the membrane. It carries out the reaction 1D-myo-inositol hexakisphosphate + H2O = 1D-myo-inositol 1,2,4,5,6-pentakisphosphate + phosphate. The catalysed reaction is 1D-myo-inositol 1,2,4,5,6-pentakisphosphate + H2O = 1D-myo-inositol 1,2,5,6-tetrakisphosphate + phosphate. The enzyme catalyses 1D-myo-inositol 1,2,5,6-tetrakisphosphate + H2O = 1D-myo-inositol 1,2,6-trisphosphate + phosphate. It catalyses the reaction 1D-myo-inositol 1,2,6-trisphosphate + H2O = 1D-myo-inositol 1,2-bisphosphate + phosphate. It carries out the reaction 1D-myo-inositol 1,2-bisphosphate + H2O = 1D-myo-inositol 2-phosphate + phosphate. The catalysed reaction is (2R)-2,3-bisphosphoglycerate + H2O = (2R)-2-phosphoglycerate + phosphate. Probable multiple inositol polyphosphate phosphatase that hydrolyzes 1D-myo-inositol 1,3,4,5,6-pentakisphosphate (InsP5[2OH]) and 1D-myo-inositol hexakisphosphate (InsP6) to a range of less phosphorylated inositol phosphates. This regulates the availability of these various small molecule second messengers and metal chelators which control many aspects of cell physiology. May have a dual substrate specificity, and function as a 2,3-bisphosphoglycerate 3-phosphatase hydrolyzing 2,3-bisphosphoglycerate to 2-phosphoglycerate. 2,3-bisphosphoglycerate (BPG) is formed as part of the Rapoport-Luebering glycolytic bypass. The polypeptide is Multiple inositol polyphosphate phosphatase 1 (mipp1) (Dictyostelium discoideum (Social amoeba)).